The chain runs to 129 residues: Large ribosomal subunit protein eL32 (129 aa).

Belongs to the eukaryotic ribosomal protein eL32 family.

The chain is Large ribosomal subunit protein eL32 (rpl32e) from Archaeoglobus fulgidus (strain ATCC 49558 / DSM 4304 / JCM 9628 / NBRC 100126 / VC-16).